The primary structure comprises 351 residues: Bifunctional UDP-glucose 4-epimerase and UDP-xylose 4-epimerase 3 (351 aa).

8–39 lines the NAD(+) pocket; that stretch reads NILVTGGAGFIGTHTVVQLLNQGFKVTIIDNL. S134 is a substrate binding site. Y158 serves as the catalytic Proton acceptor.

It belongs to the NAD(P)-dependent epimerase/dehydratase family. Homodimer. Heterodimer. NAD(+) serves as cofactor. In terms of tissue distribution, ubiquitous.

It catalyses the reaction UDP-alpha-D-glucose = UDP-alpha-D-galactose. The enzyme catalyses UDP-beta-L-arabinopyranose = UDP-alpha-D-xylose. The protein operates within carbohydrate metabolism; galactose metabolism. It participates in nucleotide-sugar biosynthesis; UDP-L-arabinose biosynthesis; UDP-L-arabinose from UDP-alpha-D-xylose: step 1/1. It functions in the pathway cell wall biogenesis; cell wall polysaccharide biosynthesis. Strongly inhibited by UDP. In terms of biological role, catalyzes the interconversion between UDP-glucose and UDP-galactose and the interconversion between UDP-arabinose and UDP-xylose. Cooperates with UGE2 in pollen development. May preferentially act in the UDP-galactose to UDP-glucose direction, therefore displaying a role in carbohydrate catabolism. The sequence is that of Bifunctional UDP-glucose 4-epimerase and UDP-xylose 4-epimerase 3 (UGE3) from Arabidopsis thaliana (Mouse-ear cress).